The primary structure comprises 487 residues: 3-octaprenyl-4-hydroxybenzoate carboxy-lyase (487 aa).

Asn172 is a binding site for Mn(2+). Prenylated FMN is bound by residues 175–177 (IYR), 189–191 (RWL), and 194–195 (RG). Glu238 lines the Mn(2+) pocket. Catalysis depends on Asp287, which acts as the Proton donor.

The protein belongs to the UbiD family. In terms of assembly, homohexamer. Prenylated FMN serves as cofactor. The cofactor is Mn(2+).

Its subcellular location is the cell membrane. It carries out the reaction a 4-hydroxy-3-(all-trans-polyprenyl)benzoate + H(+) = a 2-(all-trans-polyprenyl)phenol + CO2. It functions in the pathway cofactor biosynthesis; ubiquinone biosynthesis. Its function is as follows. Catalyzes the decarboxylation of 3-octaprenyl-4-hydroxy benzoate to 2-octaprenylphenol, an intermediate step in ubiquinone biosynthesis. This Actinobacillus pleuropneumoniae serotype 7 (strain AP76) protein is 3-octaprenyl-4-hydroxybenzoate carboxy-lyase.